We begin with the raw amino-acid sequence, 605 residues long: Formin-binding protein 1-like (605 aa).

The 263-residue stretch at 1–263 folds into the F-BAR domain; it reads MSWGTELWDQ…AAKSVDERRD (263 aa). Positions 66 to 258 form a coiled coil; that stretch reads FTSCIAFFNI…EGMILAAKSV (193 aa). The interval 245-535 is interaction with CDC42; sequence SKCLEGMILA…EFDDEFEDDD (291 aa). A Phosphoserine modification is found at Ser-295. Residues 325 to 345 form a disordered region; it reads FGKKPKPQSPPLTPTSLFTSS. The stretch at 392 to 484 forms a coiled coil; it reads LEDFSHLPPE…VEGKTGVRGD (93 aa). Residues 397-474 enclose the REM-1 domain; the sequence is HLPPEQRRKK…IHKNEAWLSE (78 aa). Residues 480–490 show a composition bias toward basic and acidic residues; it reads GVRGDRRHSSD. The interval 480–539 is disordered; it reads GVRGDRRHSSDINHLVTQGRESPEGSYTDDANQEVRGPPQQHGHHSEFDDEFEDDDPLPA. A phosphoserine mark is found at Ser-488, Ser-501, and Ser-505. Positions 522–605 are interaction with DNM1; that stretch reads GHHSEFDDEF…VTLEKNSKGS (84 aa). The span at 527–536 shows a compositional bias: acidic residues; it reads FDDEFEDDDP. Residues 538 to 599 form the SH3 domain; sequence PAIGHCKAIY…PTTYIDVTLE (62 aa). The segment at 541–597 is interaction with DNM2 and WASL; sequence GHCKAIYPFDGHNEGTLAMKEGEVLYIIEEDKGDGWTRARRQNGEEGYVPTTYIDVT. The segment at 541–605 is interaction with DAAM1, DIAPH1 and DIAPH2; that stretch reads GHCKAIYPFD…VTLEKNSKGS (65 aa).

Belongs to the FNBP1 family. Homodimerizes, the dimers can polymerize end-to-end to form filamentous structures. Interacts with GTP-bound CDC42. Interacts with DAAM1, DIAPH1, DIAPH2, DNM1, DNM2 and WASL/N-WASP. Interacts with ATG3. Interacts (via SH3 domain) with ABI1, WASF2, CDC42 and WIPF1. In terms of tissue distribution, isoform 1 is expressed in brain. Isoform 2 is expressed in brain, kidney and lung. Within the brain expression is seen in cortical neurons, hippocampal pyramidal neurons, hypothalamus and piriform cortex.

The protein localises to the cytoplasm. It localises to the cytoskeleton. It is found in the cell cortex. Its subcellular location is the cytoplasmic vesicle. The protein resides in the cell membrane. Functionally, required to coordinate membrane tubulation with reorganization of the actin cytoskeleton during endocytosis. May bind to lipids such as phosphatidylinositol 4,5-bisphosphate and phosphatidylserine and promote membrane invagination and the formation of tubules. Also promotes CDC42-induced actin polymerization by activating the WASL-WASPIP complex, the predominant form of WASL/N-WASP in cells. Actin polymerization may promote the fission of membrane tubules to form endocytic vesicles. Essential for autophagy of intracellular bacterial pathogens. May negatively regulate neurite extension and axon branching in developing neurons. The sequence is that of Formin-binding protein 1-like (Fnbp1l) from Rattus norvegicus (Rat).